A 119-amino-acid chain; its full sequence is MARSVTVIFLVLVSLAVVLAIQKTPQIQVYSRHPPENGKPNFLNCYVSQFHPPQIEIELLKNGKKIPNIEMSDLSFSKDWSFYILAHTEFTPTETDVYACRVKHVTLKEPKTVTWDRDM.

Residues 1–20 (MARSVTVIFLVLVSLAVVLA) form the signal peptide. The Ig-like C1-type domain maps to 25–114 (PQIQVYSRHP…VTLKEPKTVT (90 aa)). The cysteines at positions 45 and 100 are disulfide-linked.

This sequence belongs to the beta-2-microglobulin family. In terms of assembly, heterodimer of an alpha chain and a beta chain. Beta-2-microglobulin is the beta-chain of major histocompatibility complex class I molecules. Forms a heterotrimer with MR1 and a metabolite antigen.

It is found in the secreted. Functionally, component of the class I major histocompatibility complex (MHC). Involved in the presentation of peptide antigens to the immune system. The polypeptide is Beta-2-microglobulin (B2m) (Rattus norvegicus (Rat)).